Here is a 468-residue protein sequence, read N- to C-terminus: MSSGKIVQVIGPVVDVEFSLDQSLPDINNALVVYKNDEKKSKVVLETALELGDGVIRTIAMESTDGLQRGMEVIDTGKAISVPVGKDTLGRVFNVLGDTIDLGSSFPEDAERSEIHKKAPSFDELSTSTEILETGIKVIDLLAPYLKGGKVGLFGGAGVGKTVLIQELIHNIAQEHGGISVFTGVGERTREGNDLYYEMKDSGVIEKTAMVFGQMNEPPGARMRVALTGLTIAEYFRDVEGQDVLLFIDNIFRFTQAGSEVSALLGRMPSAVGYQPTLATEMGQLQERITSTKKGSITSIQAIYVPADDYTDPAPATAFAHLDATTNLERKLTEQGIYPAVDPLASSSSALAPEIVGEEHYKVATEVQHVLQRYRELQDIIAILGMDELSDQEKVLVSRARRVQFFLSQNFNVAEQFTGLPGSYVPVEETVKGFREILEGKYDDLPEEAFRSVGRIEDVVEKAKKLGY.

155–162 (GGAGVGKT) contributes to the ATP binding site.

The protein belongs to the ATPase alpha/beta chains family. F-type ATPases have 2 components, CF(1) - the catalytic core - and CF(0) - the membrane proton channel. CF(1) has five subunits: alpha(3), beta(3), gamma(1), delta(1), epsilon(1). CF(0) has three main subunits: a(1), b(2) and c(9-12). The alpha and beta chains form an alternating ring which encloses part of the gamma chain. CF(1) is attached to CF(0) by a central stalk formed by the gamma and epsilon chains, while a peripheral stalk is formed by the delta and b chains.

It localises to the cell membrane. It catalyses the reaction ATP + H2O + 4 H(+)(in) = ADP + phosphate + 5 H(+)(out). Produces ATP from ADP in the presence of a proton gradient across the membrane. The catalytic sites are hosted primarily by the beta subunits. This is ATP synthase subunit beta from Enterococcus hirae (strain ATCC 9790 / DSM 20160 / JCM 8729 / LMG 6399 / NBRC 3181 / NCIMB 6459 / NCDO 1258 / NCTC 12367 / WDCM 00089 / R).